The following is a 97-amino-acid chain: Putative septation protein SpoVG (97 aa).

Belongs to the SpoVG family.

Its function is as follows. Could be involved in septation. The polypeptide is Putative septation protein SpoVG (Borreliella burgdorferi (strain ATCC 35210 / DSM 4680 / CIP 102532 / B31) (Borrelia burgdorferi)).